Reading from the N-terminus, the 420-residue chain is L-rhamnose isomerase (420 aa).

Residues His264, Asp296, and Asp298 each contribute to the Mn(2+) site.

The protein belongs to the rhamnose isomerase family. It depends on Mn(2+) as a cofactor.

The protein resides in the cytoplasm. The enzyme catalyses L-rhamnopyranose = L-rhamnulose. It functions in the pathway carbohydrate degradation; L-rhamnose degradation; glycerone phosphate from L-rhamnose: step 1/3. Its function is as follows. Catalyzes the interconversion of L-rhamnose and L-rhamnulose. This is L-rhamnose isomerase from Listeria monocytogenes serovar 1/2a (strain ATCC BAA-679 / EGD-e).